Here is a 178-residue protein sequence, read N- to C-terminus: Gamma-crystallin S (178 aa).

Ser2 bears the N-acetylserine mark. The interval 2-5 is N-terminal arm; the sequence is SKSV. Beta/gamma crystallin 'Greek key' domains are found at residues 6-44 and 45-87; these read AKIT…RVTG and GAWV…KVIH. The tract at residues 88–93 is connecting peptide; sequence LSSGGQ. Beta/gamma crystallin 'Greek key' domains are found at residues 94–134 and 135–177; these read YKLQ…KVLD and GVWV…RRIM.

The protein belongs to the beta/gamma-crystallin family. Monomer.

In terms of biological role, crystallins are the dominant structural components of the vertebrate eye lens. The sequence is that of Gamma-crystallin S (CRYGS) from Macropus fuliginosus (Western gray kangaroo).